A 178-amino-acid chain; its full sequence is Gamma-crystallin S (178 aa).

At Ser-2 the chain carries N-acetylserine. Residues 2-5 (SKTG) form an N-terminal arm region. 2 consecutive Beta/gamma crystallin 'Greek key' domains span residues 6 to 44 (AKISFYEDRNFQGRRYDCDCDCVDFRSYLSRCNSIRVEG) and 45 to 87 (GTWA…RAVH). The segment at 88 to 93 (LSSGGQ) is connecting peptide. Beta/gamma crystallin 'Greek key' domains follow at residues 94–134 (YKIQ…KVLE) and 135–177 (GTWI…RRIV).

It belongs to the beta/gamma-crystallin family. Monomer.

Functionally, crystallins are the dominant structural components of the vertebrate eye lens. This Rattus norvegicus (Rat) protein is Gamma-crystallin S (Crygs).